The sequence spans 553 residues: ATP synthase F(1) complex subunit alpha, mitochondrial (553 aa).

Residues 1-43 constitute a mitochondrion transit peptide; sequence MLSVRVAAAVARALPRRAGLVSKNALGSSFVAARNLHASNTRL. A phosphoserine mark is found at S53 and S65. The residue at position 76 (S76) is a Phosphoserine; alternate. The O-linked (GlcNAc) serine; alternate glycan is linked to S76. Position 106 is a phosphoserine (S106). K123, K126, and K132 each carry N6-acetyllysine. A Phosphothreonine modification is found at T134. The residue at position 161 (K161) is an N6-acetyllysine; alternate. K161 is modified (N6-succinyllysine; alternate). S166 is modified (phosphoserine). K167 bears the N6-acetyllysine; alternate mark. Position 167 is an N6-succinyllysine; alternate (K167). Position 184 is a phosphoserine (S184). R204 is subject to Omega-N-methylarginine. Residues Q215, G217, K218, T219, and S220 each contribute to the ATP site. T219 is a Mg(2+) binding site. N6-acetyllysine; alternate is present on residues K230 and K239. An N6-succinyllysine; alternate mark is found at K230 and K239. K240 bears the N6-acetyllysine mark. Residues K261 and K305 each carry the N6-acetyllysine; alternate modification. An N6-succinyllysine; alternate mark is found at K261 and K305. D312 contacts Mg(2+). At K427 the chain carries N6-acetyllysine; alternate. Position 427 is an N6-succinyllysine; alternate (K427). Residue K434 is modified to N6-acetyllysine. Positions 473 and 475 each coordinate ATP. N6-acetyllysine; alternate occurs at positions 498, 506, 531, and 539. 4 positions are modified to N6-succinyllysine; alternate: K498, K506, K531, and K539. N6-acetyllysine is present on K541.

The protein belongs to the ATPase alpha/beta chains family. In terms of assembly, homotrimer. Component of the ATP synthase complex composed at least of ATP5F1A/subunit alpha, ATP5F1B/subunit beta, ATP5MC1/subunit c (homooctomer), MT-ATP6/subunit a, MT-ATP8/subunit 8, ATP5ME/subunit e, ATP5MF/subunit f, ATP5MG/subunit g, ATP5MK/subunit k, ATP5MJ/subunit j, ATP5F1C/subunit gamma, ATP5F1D/subunit delta, ATP5F1E/subunit epsilon, ATP5PF/subunit F6, ATP5PB/subunit b, ATP5PD/subunit d, ATP5PO/subunit OSCP. ATP synthase complex consists of a soluble F(1) head domain (subunits alpha(3) and beta(3)) - the catalytic core - and a membrane F(0) domain - the membrane proton channel (subunits c, a, 8, e, f, g, k and j). These two domains are linked by a central stalk (subunits gamma, delta, and epsilon) rotating inside the F1 region and a stationary peripheral stalk (subunits F6, b, d, and OSCP). Interacts with ATPAF2. Interacts with HRG; the interaction occurs on the surface of T-cells and alters the cell morphology when associated with concanavalin (in vitro). Interacts with PLG (angiostatin peptide); the interaction inhibits most of the angiogenic properties of angiostatin. Interacts with BLOC1S1. Interacts with BCL2L1 isoform BCL-X(L); the interaction mediates the association of BCL2L1 isoform BCL-X(L) with the mitochondrial membrane F(1)F(0) ATP synthase and enhances neurons metabolic efficiency. Interacts with CLN5 and PPT1. Interacts with S100A1; this interaction increases F1-ATPase activity. Interacts with ABCB7; this interaction allows the regulation of cellular iron homeostasis and cellular reactive oxygen species (ROS) levels in cardiomyocytes. Post-translationally, acetylated on lysine residues. BLOC1S1 is required for acetylation. As to expression, expressed in heart (at protein level).

It is found in the mitochondrion. Its subcellular location is the mitochondrion inner membrane. The protein resides in the cell membrane. In terms of biological role, subunit alpha, of the mitochondrial membrane ATP synthase complex (F(1)F(0) ATP synthase or Complex V) that produces ATP from ADP in the presence of a proton gradient across the membrane which is generated by electron transport complexes of the respiratory chain. ATP synthase complex consist of a soluble F(1) head domain - the catalytic core - and a membrane F(1) domain - the membrane proton channel. These two domains are linked by a central stalk rotating inside the F(1) region and a stationary peripheral stalk. During catalysis, ATP synthesis in the catalytic domain of F(1) is coupled via a rotary mechanism of the central stalk subunits to proton translocation. In vivo, can only synthesize ATP although its ATP hydrolase activity can be activated artificially in vitro. With the catalytic subunit beta (ATP5F1B), forms the catalytic core in the F(1) domain. Subunit alpha does not bear the catalytic high-affinity ATP-binding sites. The sequence is that of ATP synthase F(1) complex subunit alpha, mitochondrial from Sus scrofa (Pig).